The chain runs to 372 residues: uncharacterized protein (372 aa).

The PNPLA domain occupies 38 to 270 (FFIEGGGTKG…ANNIPLDYLI (233 aa)). A GXGXXG motif is present at residues 42–47 (GGGTKG). The GXSXG motif lies at 74–78 (GTSVG). Catalysis depends on Ser-76, which acts as the Nucleophile. Asp-257 (proton acceptor) is an active-site residue. Residues 257–259 (DGG) carry the DGA/G motif.

Probable lipid hydrolase. This is an uncharacterized protein from Acanthamoeba polyphaga (Amoeba).